The chain runs to 1009 residues: Rho-type GTPase-activating protein 2 (1009 aa).

LIM zinc-binding domains follow at residues 11–68 (SLCV…DCSD) and 69–129 (KCTN…LLRK). Residues 143–155 (KEDFPIKLPERSV) show a composition bias toward basic and acidic residues. Disordered regions lie at residues 143–228 (KEDF…RTVS), 358–433 (TKEN…LSRS), 449–608 (TSEM…DATD), 664–709 (TREK…ASPK), and 723–780 (QVGD…DYTP). The span at 162 to 196 (TRINGKSDVSTNNTAISKNLVSSNEDQQLTPQVLV) shows a compositional bias: polar residues. The span at 212-222 (DNSKDREETSS) shows a compositional bias: basic and acidic residues. 2 stretches are compositionally biased toward polar residues: residues 363-385 (KSSQ…ITRT) and 399-414 (LRLS…QTAD). Basic residues predominate over residues 481-491 (NIRKSKAKKNP). Polar residues-rich tracts occupy residues 493–510 (SRGQ…QHGN) and 522–553 (QSSL…SSSG). Basic and acidic residues predominate over residues 664–682 (TREKDKQSASSRESLEQKE). 2 stretches are compositionally biased toward polar residues: residues 683 to 707 (NIAT…SNAS) and 728 to 749 (ESQQ…QKEI). S763 carries the phosphoserine modification. The region spanning 788–1006 (SSLQARCAYE…FILGNYRDIF (219 aa)) is the Rho-GAP domain.

Its function is as follows. GTPase-activating protein (GAP) for CDC42 and/or RHO1. This Saccharomyces cerevisiae (strain ATCC 204508 / S288c) (Baker's yeast) protein is Rho-type GTPase-activating protein 2 (RGA2).